Here is a 75-residue protein sequence, read N- to C-terminus: Stewaprin-a (75 aa).

The first 24 residues, 1–24 (MSSGGLLLLLGLLTLWAELIPVSG), serve as a signal peptide directing secretion. The 46-residue stretch at 27-72 (HPKKPGLCPPRPQKPPCVRECKNDWSCPGEQKCCRYGCIFECRDPI) folds into the WAP domain. Intrachain disulfides connect Cys34/Cys60, Cys43/Cys64, Cys47/Cys59, and Cys53/Cys68.

Belongs to the venom waprin family. Expressed by the venom gland.

It localises to the secreted. Its function is as follows. Damages membranes of susceptible bacteria. Has no hemolytic activity. Not toxic to mice. Does not inhibit the proteinases elastase and cathepsin G. In Hoplocephalus stephensii (Stephens's banded snake), this protein is Stewaprin-a.